The following is a 208-amino-acid chain: Small ribosomal subunit protein uS4 (208 aa).

The disordered stretch occupies residues M29–S48. Positions Q95–Q155 constitute an S4 RNA-binding domain.

The protein belongs to the universal ribosomal protein uS4 family. Part of the 30S ribosomal subunit. Contacts protein S5. The interaction surface between S4 and S5 is involved in control of translational fidelity.

Functionally, one of the primary rRNA binding proteins, it binds directly to 16S rRNA where it nucleates assembly of the body of the 30S subunit. In terms of biological role, with S5 and S12 plays an important role in translational accuracy. This Micrococcus luteus (strain ATCC 4698 / DSM 20030 / JCM 1464 / CCM 169 / CCUG 5858 / IAM 1056 / NBRC 3333 / NCIMB 9278 / NCTC 2665 / VKM Ac-2230) (Micrococcus lysodeikticus) protein is Small ribosomal subunit protein uS4.